Here is a 370-residue protein sequence, read N- to C-terminus: 3-dehydroquinate synthase (370 aa).

NAD(+) is bound by residues 107–111 (GVIGD), 131–132 (TS), Lys144, and Lys153. Positions 186, 249, and 267 each coordinate Zn(2+).

This sequence belongs to the sugar phosphate cyclases superfamily. Dehydroquinate synthase family. The cofactor is Co(2+). Requires Zn(2+) as cofactor. It depends on NAD(+) as a cofactor.

The protein resides in the cytoplasm. It carries out the reaction 7-phospho-2-dehydro-3-deoxy-D-arabino-heptonate = 3-dehydroquinate + phosphate. It functions in the pathway metabolic intermediate biosynthesis; chorismate biosynthesis; chorismate from D-erythrose 4-phosphate and phosphoenolpyruvate: step 2/7. In terms of biological role, catalyzes the conversion of 3-deoxy-D-arabino-heptulosonate 7-phosphate (DAHP) to dehydroquinate (DHQ). The chain is 3-dehydroquinate synthase from Roseobacter denitrificans (strain ATCC 33942 / OCh 114) (Erythrobacter sp. (strain OCh 114)).